The sequence spans 261 residues: Imidazole glycerol phosphate synthase subunit HisF (261 aa).

Residues D12 and D131 contribute to the active site.

This sequence belongs to the HisA/HisF family. Heterodimer of HisH and HisF.

It localises to the cytoplasm. It catalyses the reaction 5-[(5-phospho-1-deoxy-D-ribulos-1-ylimino)methylamino]-1-(5-phospho-beta-D-ribosyl)imidazole-4-carboxamide + L-glutamine = D-erythro-1-(imidazol-4-yl)glycerol 3-phosphate + 5-amino-1-(5-phospho-beta-D-ribosyl)imidazole-4-carboxamide + L-glutamate + H(+). Its pathway is amino-acid biosynthesis; L-histidine biosynthesis; L-histidine from 5-phospho-alpha-D-ribose 1-diphosphate: step 5/9. Its function is as follows. IGPS catalyzes the conversion of PRFAR and glutamine to IGP, AICAR and glutamate. The HisF subunit catalyzes the cyclization activity that produces IGP and AICAR from PRFAR using the ammonia provided by the HisH subunit. This chain is Imidazole glycerol phosphate synthase subunit HisF, found in Brucella anthropi (strain ATCC 49188 / DSM 6882 / CCUG 24695 / JCM 21032 / LMG 3331 / NBRC 15819 / NCTC 12168 / Alc 37) (Ochrobactrum anthropi).